Here is a 96-residue protein sequence, read N- to C-terminus: Cobalt transport protein CbiN (96 aa).

2 helical membrane passes run 4 to 24 (WLAAGGILLGALVVFSFVSAG) and 59 to 79 (IESLLFSIQAAVGGIIIGYYL).

Belongs to the CbiN family. Forms an energy-coupling factor (ECF) transporter complex composed of an ATP-binding protein (A component, CbiO), a transmembrane protein (T component, CbiQ) and 2 possible substrate-capture proteins (S components, CbiM and CbiN) of unknown stoichimetry.

It localises to the cell membrane. It functions in the pathway cofactor biosynthesis; adenosylcobalamin biosynthesis. Its function is as follows. Part of the energy-coupling factor (ECF) transporter complex CbiMNOQ involved in cobalt import. This is Cobalt transport protein CbiN from Halobacterium salinarum (strain ATCC 29341 / DSM 671 / R1).